The chain runs to 546 residues: Coatomer subunit delta (546 aa).

The segment at asparagine 190–glutamine 440 is interaction with DSL1. Positions proline 236 to glutamate 287 are disordered. The span at arginine 260–glycine 276 shows a compositional bias: low complexity. Threonine 277 is modified (phosphothreonine). In terms of domain architecture, MHD spans asparagine 288–glutamine 546.

It belongs to the adaptor complexes medium subunit family. Delta-COP subfamily. Oligomeric complex that consists of at least the alpha, beta, beta', gamma, delta, epsilon and zeta subunits. Interacts with DSL1.

The protein resides in the cytoplasm. The protein localises to the golgi apparatus membrane. It localises to the cytoplasmic vesicle. Its subcellular location is the COPI-coated vesicle membrane. In terms of biological role, the coatomer is a cytosolic protein complex that binds to dilysine motifs and reversibly associates with Golgi non-clathrin-coated vesicles, which further mediate biosynthetic protein transport from the ER, via the Golgi up to the trans Golgi network. Coatomer complex is required for budding from Golgi membranes, and is essential for the retrograde Golgi-to-ER transport of dilysine-tagged proteins. This is Coatomer subunit delta (RET2) from Saccharomyces cerevisiae (strain ATCC 204508 / S288c) (Baker's yeast).